The sequence spans 583 residues: Immunity-related GTPase family Q protein (583 aa).

A disulfide bond links Cys-152 and Cys-158. Residues 155–179 (SDRCEELERLQVVLRTQAEALQRLL) are a coiled coil. Positions 186-189 (FEVL) match the LIR 1 motif. The residue at position 203 (Thr-203) is a Phosphothreonine. Residues 223–409 (ARLDLAVAGT…PGLGTWLQHA (187 aa)) form the IRG-type G domain. Residues 322–373 (APLVGVRTDGQGEDPPEVLEEEKAQNASDGNSGDARSEGKKAGIGDSGCTAA) form a disordered region. Residues 332-341 (QGEDPPEVLE) show a composition bias toward acidic residues. Residues 381 to 384 (WEVL) carry the LIR 2 motif.

It belongs to the TRAFAC class dynamin-like GTPase superfamily. IRG family. Interacts (via LIR motif 1) with GABARAPL2. Interacts (via LIR motif 2) with MAP1LC3B/LC3B.

The protein resides in the lysosome. Its subcellular location is the cytoplasmic vesicle. The protein localises to the autophagosome. Functionally, autophagy receptor that specifically promotes clearance of misfolded MHC class I molecules by targeting them to the lysosome for degradation. Acts as a molecular adapter that specifically recognizes and binds (1) misfolded MHC class I molecules following their ubiquitination, as well as (2) autophagy-related proteins, promoting the recruitment of misfolded MHC class I molecules to autophagy machinery for degradation. Degradation of misfolded MHC class I molecules is essential to prevent accumulation of defective MHC class I complexes at the surface of CD8(+) T-cells and prevent a stronger T-cell-mediated response. In contrast to other members of the family, does not show GTPase activity. The protein is Immunity-related GTPase family Q protein (Irgq) of Mus musculus (Mouse).